We begin with the raw amino-acid sequence, 83 residues long: Small ribosomal subunit protein uS15c (83 aa).

This sequence belongs to the universal ribosomal protein uS15 family. Part of the 30S ribosomal subunit.

The protein localises to the plastid. It localises to the chloroplast. The polypeptide is Small ribosomal subunit protein uS15c (rps15) (Fagopyrum esculentum subsp. ancestrale (Wild buckwheat)).